We begin with the raw amino-acid sequence, 232 residues long: 7-cyano-7-deazaguanine synthase (232 aa).

ATP is bound at residue 7–17; it reads CSGGLDSVSLA. Zn(2+) is bound by residues C185, C193, C196, and C199.

The protein belongs to the QueC family. Requires Zn(2+) as cofactor.

The catalysed reaction is 7-carboxy-7-deazaguanine + NH4(+) + ATP = 7-cyano-7-deazaguanine + ADP + phosphate + H2O + H(+). Its pathway is purine metabolism; 7-cyano-7-deazaguanine biosynthesis. In terms of biological role, catalyzes the ATP-dependent conversion of 7-carboxy-7-deazaguanine (CDG) to 7-cyano-7-deazaguanine (preQ(0)). This chain is 7-cyano-7-deazaguanine synthase, found in Brucella anthropi (strain ATCC 49188 / DSM 6882 / CCUG 24695 / JCM 21032 / LMG 3331 / NBRC 15819 / NCTC 12168 / Alc 37) (Ochrobactrum anthropi).